The primary structure comprises 121 residues: Small ribosomal subunit protein bS6 (121 aa).

A disordered region spans residues 99 to 121; it reads PSLMMRNVEREEARKTQQQEFAA. Residues 105–115 are compositionally biased toward basic and acidic residues; it reads NVEREEARKTQ.

Belongs to the bacterial ribosomal protein bS6 family.

Functionally, binds together with bS18 to 16S ribosomal RNA. The chain is Small ribosomal subunit protein bS6 from Polaromonas naphthalenivorans (strain CJ2).